Reading from the N-terminus, the 243-residue chain is Tubulin-folding cofactor B (243 aa).

One can recognise a CAP-Gly domain in the interval 181–223 (RAESLGPGYWVGIQYDEPLGKHDGMVKGTRFFECPRLQGGMVR).

The protein belongs to the TBCB family. As to quaternary structure, supercomplex made of cofactors A to E. Cofactors A and D function by capturing and stabilizing tubulin in a quasi-native conformation. Cofactor E binds to the cofactor D-tubulin complex; interaction with cofactor C then causes the release of tubulin polypeptides that are committed to the native state. Interacts with TUBA6. In terms of tissue distribution, expressed in roots, stems, leaves, flowers and siliques.

Its subcellular location is the cytoplasm. Its function is as follows. Involved in control of cell division. Regulates probably the availability of alpha-tubulin for dimerization of alpha-/beta-tubulin, which is required for proper microtubule biogenesis. Decreased expression of TFCB results in enlarged mesophyll cells and leaf epidermal cells with bulged nuclei, increased ploidy and increased numbers of spindles and phragmoplasts. This chain is Tubulin-folding cofactor B (TFCB), found in Arabidopsis thaliana (Mouse-ear cress).